A 786-amino-acid chain; its full sequence is Cas scaffolding protein family member 4 (786 aa).

In terms of domain architecture, SH3 spans 11 to 73 (PKALLARALY…PANRLQILTE (63 aa)). 2 positions are modified to phosphoserine: Ser200 and Ser249. Residues 262-295 (SFAEESRPHALPSSSSTFYNPPSGRSRSLTPQLN) are disordered. Positions 273–295 (PSSSSTFYNPPSGRSRSLTPQLN) are enriched in polar residues. The residue at position 305 (Ser305) is a Phosphoserine. Disordered regions lie at residues 361-429 (QAGK…SEES) and 612-670 (IQPP…ERKP). Residues 364-373 (KELEKAKEVS) are compositionally biased toward basic and acidic residues. Residues 374–391 (ENSAGHNSSWFSRRTTSP) are compositionally biased toward polar residues. 2 positions are modified to phosphoserine: Ser376 and Ser390. Over residues 399–427 (SGSSSDSRASIVSSCSTTSTDDSSSSSSE) the composition is skewed to low complexity. Basic and acidic residues predominate over residues 630-642 (KQREDEHSSELLK).

This sequence belongs to the CAS family. Interacts (via SH3 domain) with PTK2/FAK1 (via C-terminus). Post-translationally, phosphorylated on tyrosines by SRC. As to expression, expressed abundantly in lung and spleen. Also highly expressed in ovarian and leukemia cell lines.

The protein resides in the cytoplasm. It localises to the cytoskeleton. It is found in the cell junction. Its subcellular location is the focal adhesion. Docking protein that plays a role in tyrosine kinase-based signaling related to cell adhesion and cell spreading. Regulates PTK2/FAK1 activity, focal adhesion integrity, and cell spreading. The protein is Cas scaffolding protein family member 4 (CASS4) of Homo sapiens (Human).